We begin with the raw amino-acid sequence, 242 residues long: ATP synthase subunit a (242 aa).

The next 6 membrane-spanning stretches (helical) occupy residues 29-49 (SSIY…LAFY), 84-104 (FIPL…LGMT), 114-134 (IIVT…VGFV), 140-160 (FLTL…MIVI), 189-209 (VIAG…IPLM), and 210-230 (MILI…FTIL).

This sequence belongs to the ATPase A chain family. In terms of assembly, F-type ATPases have 2 components, CF(1) - the catalytic core - and CF(0) - the membrane proton channel. CF(1) has five subunits: alpha(3), beta(3), gamma(1), delta(1), epsilon(1). CF(0) has three main subunits: a(1), b(2) and c(9-12). The alpha and beta chains form an alternating ring which encloses part of the gamma chain. CF(1) is attached to CF(0) by a central stalk formed by the gamma and epsilon chains, while a peripheral stalk is formed by the delta and b chains.

The protein localises to the cell inner membrane. Functionally, key component of the proton channel; it plays a direct role in the translocation of protons across the membrane. The chain is ATP synthase subunit a from Rickettsia massiliae (strain Mtu5).